Consider the following 59-residue polypeptide: Large ribosomal subunit protein uL30 (59 aa).

This sequence belongs to the universal ribosomal protein uL30 family. Part of the 50S ribosomal subunit.

The sequence is that of Large ribosomal subunit protein uL30 from Staphylococcus aureus (strain JH1).